The sequence spans 276 residues: Rhomboid protease GlpG (276 aa).

6 consecutive transmembrane segments (helical) span residues 94–114 (GPVT…MSLI), 142–162 (IFMH…WYLG), 169–189 (LGSG…GYVQ), 192–212 (FSGP…GYVW), 229–249 (LIIF…GMSM), and 250–270 (ANGA…VDTL). Ser-201 (nucleophile) is an active-site residue. His-254 is an active-site residue.

The protein belongs to the peptidase S54 family.

The protein localises to the cell inner membrane. The catalysed reaction is Cleaves type-1 transmembrane domains using a catalytic dyad composed of serine and histidine that are contributed by different transmembrane domains.. In terms of biological role, rhomboid-type serine protease that catalyzes intramembrane proteolysis. This Salmonella choleraesuis (strain SC-B67) protein is Rhomboid protease GlpG.